Consider the following 356-residue polypeptide: MIRISIDVMGGDYGPEATIAGAARVTEYLPNIYFLFYGLEETVKPVLKKYPCLASISCFCPTESYTRMDEKPSQALRNGRGKSSMWHAIEAVKNGEADVCISAGNTGALMAMSYFCLKMMAEAERPGIAGIWPTLRSESIVLDIGATIGASANQLVDFAVMGAGMFRALYHTEKPSVGLLNVGVEEVKGLYAIKKAGMILREVQLEGLEYKGFVEGNDIGKGTVDVVVTEGFSGNIALKTAEGTARQIGEILNSAMRSSFFSSLGYFLSRGAFRTLKHKMDPDRVNGGVLLGLNGIVIKSHGSANADGFASAIRIGYTMVHNGLLKKITADLRRFHQNKQTLFYKEDKATENEKII.

The protein belongs to the PlsX family. As to quaternary structure, homodimer. Probably interacts with PlsY.

The protein resides in the cytoplasm. The catalysed reaction is a fatty acyl-[ACP] + phosphate = an acyl phosphate + holo-[ACP]. It participates in lipid metabolism; phospholipid metabolism. In terms of biological role, catalyzes the reversible formation of acyl-phosphate (acyl-PO(4)) from acyl-[acyl-carrier-protein] (acyl-ACP). This enzyme utilizes acyl-ACP as fatty acyl donor, but not acyl-CoA. This chain is Phosphate acyltransferase, found in Bartonella henselae (strain ATCC 49882 / DSM 28221 / CCUG 30454 / Houston 1) (Rochalimaea henselae).